The chain runs to 125 residues: Large ribosomal subunit protein bL17 (125 aa).

The protein belongs to the bacterial ribosomal protein bL17 family. Part of the 50S ribosomal subunit. Contacts protein L32.

The sequence is that of Large ribosomal subunit protein bL17 from Blochmanniella floridana.